A 458-amino-acid polypeptide reads, in one-letter code: ATP synthase subunit beta (458 aa).

148–155 contributes to the ATP binding site; that stretch reads GGAGVGKT.

The protein belongs to the ATPase alpha/beta chains family. F-type ATPases have 2 components, CF(1) - the catalytic core - and CF(0) - the membrane proton channel. CF(1) has five subunits: alpha(3), beta(3), gamma(1), delta(1), epsilon(1). CF(0) has three main subunits: a(1), b(2) and c(9-12). The alpha and beta chains form an alternating ring which encloses part of the gamma chain. CF(1) is attached to CF(0) by a central stalk formed by the gamma and epsilon chains, while a peripheral stalk is formed by the delta and b chains.

The protein resides in the cell inner membrane. The catalysed reaction is ATP + H2O + 4 H(+)(in) = ADP + phosphate + 5 H(+)(out). In terms of biological role, produces ATP from ADP in the presence of a proton gradient across the membrane. The catalytic sites are hosted primarily by the beta subunits. This chain is ATP synthase subunit beta, found in Pseudomonas fluorescens (strain SBW25).